The chain runs to 520 residues: Erythritol kinase (520 aa).

It belongs to the FGGY kinase family.

It catalyses the reaction erythritol + ATP = D-erythritol 1-phosphate + ADP + H(+). The protein operates within carbohydrate metabolism; erythritol degradation. Functionally, catalyzes the phosphorylation of erythritol to D-erythritol-1-phosphate. The polypeptide is Erythritol kinase (Brucella abortus (strain 2308)).